A 360-amino-acid chain; its full sequence is MLLSLFEFLSEYYRGFNVFQYLTLRAILGVLTALIIAFLVGPAMIRRLSLYKIGQQVRTDGPQTHLTKAGTPTMGGALILVAVAVSTLLWSDLSNRFVWVVLMVTLLFGLIGGIDDYRKLRYGNSKGLSARTKFFWQSVVGFATAILLYYTAQAPVETTFFVPLFKDVAIQLGPWFILLTWFVIVGASNAVNLTDGLDGLAIMPTVLVAGAFGVFAYLSGHAVFANYLGIPYVPGVGDLVVFTGALVGAGLGFLWFNAYPAQVFMGDVGALALGAALGVLAVVTRQEIVLVIMGGVFVVETLSVIMQVVSYKLTGRRIFRMAPLHHHFELKGWPEPRVIVRFWIITVILVLVGLATLKLR.

The next 10 membrane-spanning stretches (helical) occupy residues 26-46 (AILGVLTALIIAFLVGPAMIR), 70-90 (GTPTMGGALILVAVAVSTLLW), 97-117 (FVWVVLMVTLLFGLIGGIDDY), 134-154 (FFWQSVVGFATAILLYYTAQA), 168-188 (VAIQLGPWFILLTWFVIVGAS), 199-219 (GLAIMPTVLVAGAFGVFAYLS), 236-256 (VGDLVVFTGALVGAGLGFLWF), 263-283 (VFMGDVGALALGAALGVLAVV), 288-308 (IVLVIMGGVFVVETLSVIMQV), and 338-358 (VIVRFWIITVILVLVGLATLK).

Belongs to the glycosyltransferase 4 family. MraY subfamily. Requires Mg(2+) as cofactor.

It is found in the cell inner membrane. It catalyses the reaction UDP-N-acetyl-alpha-D-muramoyl-L-alanyl-gamma-D-glutamyl-meso-2,6-diaminopimeloyl-D-alanyl-D-alanine + di-trans,octa-cis-undecaprenyl phosphate = di-trans,octa-cis-undecaprenyl diphospho-N-acetyl-alpha-D-muramoyl-L-alanyl-D-glutamyl-meso-2,6-diaminopimeloyl-D-alanyl-D-alanine + UMP. It functions in the pathway cell wall biogenesis; peptidoglycan biosynthesis. Catalyzes the initial step of the lipid cycle reactions in the biosynthesis of the cell wall peptidoglycan: transfers peptidoglycan precursor phospho-MurNAc-pentapeptide from UDP-MurNAc-pentapeptide onto the lipid carrier undecaprenyl phosphate, yielding undecaprenyl-pyrophosphoryl-MurNAc-pentapeptide, known as lipid I. The protein is Phospho-N-acetylmuramoyl-pentapeptide-transferase of Thioalkalivibrio sulfidiphilus (strain HL-EbGR7).